Consider the following 370-residue polypeptide: MANYSHAADNILQNLSPLTAFLKLTSLGFIIGVSVVGNLLISILLVKDKTLHRAPYYFLLDLCCSDILRSAICFPFVFNSVKNGSTWTYGTLTCKVIAFLGVLSCFHTAFMLFCISVTRYLAIAHHRFYTKRLTFWTCLAVICMVWTLSVAMAFPPVLDVGTYSFIREEDQCTFQHRSFRANDSLGFMLLLALILLATQLVYLKLIFFVHDRRKMKPVQFVAAVSQNWTFHGPGASGQAAANWLAGFGRGPTPPTLLGIRQNANTTGRRRLLVLDEFKMEKRISRMFYIMTFLFLTLWGPYLVACYWRVFARGPVVPGGFLTAAVWMSFAQAGINPFVCIFSNRELRRCFSTTLLYCRKSRLPREPYCVI.

Residues 1 to 25 are Extracellular-facing; the sequence is MANYSHAADNILQNLSPLTAFLKLT. The N-linked (GlcNAc...) asparagine glycan is linked to Asn3. A helical transmembrane segment spans residues 26 to 46; sequence SLGFIIGVSVVGNLLISILLV. Over 47–57 the chain is Cytoplasmic; the sequence is KDKTLHRAPYY. Residues 58-78 form a helical membrane-spanning segment; the sequence is FLLDLCCSDILRSAICFPFVF. Residues 79–96 are Extracellular-facing; it reads NSVKNGSTWTYGTLTCKV. N-linked (GlcNAc...) asparagine glycosylation occurs at Asn83. Cys94 and Cys172 are oxidised to a cystine. The chain crosses the membrane as a helical span at residues 97 to 117; sequence IAFLGVLSCFHTAFMLFCISV. At 118 to 137 the chain is on the cytoplasmic side; the sequence is TRYLAIAHHRFYTKRLTFWT. A helical membrane pass occupies residues 138 to 158; the sequence is CLAVICMVWTLSVAMAFPPVL. Residues 159 to 188 are Extracellular-facing; it reads DVGTYSFIREEDQCTFQHRSFRANDSLGFM. Residue Asn182 is glycosylated (N-linked (GlcNAc...) asparagine). A helical membrane pass occupies residues 189–209; it reads LLLALILLATQLVYLKLIFFV. The Cytoplasmic segment spans residues 210–286; sequence HDRRKMKPVQ…FKMEKRISRM (77 aa). Residues 287 to 307 form a helical membrane-spanning segment; that stretch reads FYIMTFLFLTLWGPYLVACYW. At 308–313 the chain is on the extracellular side; sequence RVFARG. Residues 314-334 traverse the membrane as a helical segment; it reads PVVPGGFLTAAVWMSFAQAGI. Residues 335-370 lie on the Cytoplasmic side of the membrane; it reads NPFVCIFSNRELRRCFSTTLLYCRKSRLPREPYCVI.

This sequence belongs to the G-protein coupled receptor 1 family. As to quaternary structure, interacts with DLG4 and DLG3. Highly expressed in brain and testis. Lower levels in small intestine, placenta and spleen. In brain regions, detected in all regions tested, but somewhat lower levels in the corpus callosum, medulla and spinal cord.

It is found in the cell membrane. Its subcellular location is the endoplasmic reticulum. In terms of biological role, orphan receptor. In Homo sapiens (Human), this protein is Probable G-protein coupled receptor 85 (GPR85).